We begin with the raw amino-acid sequence, 220 residues long: ATP-dependent Clp protease proteolytic subunit (220 aa).

Residue Ser122 is the Nucleophile of the active site. Residue His147 is part of the active site.

The protein belongs to the peptidase S14 family. Fourteen ClpP subunits assemble into 2 heptameric rings which stack back to back to give a disk-like structure with a central cavity, resembling the structure of eukaryotic proteasomes.

Its subcellular location is the cytoplasm. It carries out the reaction Hydrolysis of proteins to small peptides in the presence of ATP and magnesium. alpha-casein is the usual test substrate. In the absence of ATP, only oligopeptides shorter than five residues are hydrolyzed (such as succinyl-Leu-Tyr-|-NHMec, and Leu-Tyr-Leu-|-Tyr-Trp, in which cleavage of the -Tyr-|-Leu- and -Tyr-|-Trp bonds also occurs).. In terms of biological role, cleaves peptides in various proteins in a process that requires ATP hydrolysis. Has a chymotrypsin-like activity. Plays a major role in the degradation of misfolded proteins. The polypeptide is ATP-dependent Clp protease proteolytic subunit (Colwellia psychrerythraea (strain 34H / ATCC BAA-681) (Vibrio psychroerythus)).